The chain runs to 186 residues: TATA-box-binding protein 2 (186 aa).

Tandem repeats lie at residues 10–86 (IQNV…FDKL) and 101–179 (VQNI…VERI). Residues K53 and K63 each participate in a glycyl lysine isopeptide (Lys-Gly) (interchain with G-Cter in SAMP2) cross-link.

Belongs to the TBP family.

General factor that plays a role in the activation of archaeal genes transcribed by RNA polymerase. Binds specifically to the TATA box promoter element which lies close to the position of transcription initiation. The polypeptide is TATA-box-binding protein 2 (tbp2) (Haloferax volcanii (strain ATCC 29605 / DSM 3757 / JCM 8879 / NBRC 14742 / NCIMB 2012 / VKM B-1768 / DS2) (Halobacterium volcanii)).